A 905-amino-acid chain; its full sequence is Sun domain-containing protein 1 (905 aa).

Disordered regions lie at residues 1–21 (MSGD…LPLQ), 41–166 (NNTV…ILKQ), and 207–242 (QQQQ…IDNN). Over 1 to 290 (MSGDYKPNYQ…NNNNKVNFKQ (290 aa)) the chain is Nuclear. Composition is skewed to low complexity over residues 41 to 67 (NNTV…SSYL) and 75 to 101 (SNQI…ASSS). The segment covering 107–116 (KVDHNSHNNN) has biased composition (basic and acidic residues). Positions 117–126 (DDDDIEDDVD) are enriched in acidic residues. The span at 129 to 146 (YSTNNASSNILHNRFSNS) shows a compositional bias: polar residues. Positions 170–221 (LYNHLNNQIQQQQQQQQQQQQQQQQQQQQQQQQQQQQQQQQQQQRNNNNNSN) form a coiled coil. The segment covering 207–227 (QQQQQQQRNNNNNSNSSNNNN) has biased composition (low complexity). Residues 291 to 311 (AIWIFIFSVLFIGCLLGLFST) form a helical membrane-spanning segment. Over 312-905 (NFYGIHIYFP…IEKQQQSDEL (594 aa)) the chain is Perinuclear space. 2 coiled-coil regions span residues 359 to 456 (KKNE…QLIQ) and 504 to 609 (REFN…TQQF). One can recognise an SUN domain in the interval 662–860 (GASIEYNALH…YRFRVHGYQI (199 aa)). Residues 864 to 901 (EQEQIQIIQEEQSFKQEEINQQQIEQIEQIEQIEKQQQ) are a coiled coil.

Homodimer and homooligomer.

It localises to the nucleus membrane. In terms of biological role, may have an important role in defining the spacing of the nuclear envelope lumen. Essential for centrosome attachment to the nucleus, maintenance of correct ploidy, proper mitosis, association of the centromere cluster with the centrosome and the maintenance of genome stability. Requires direct chromatin binding for inner nuclear membrane targeting. The sequence is that of Sun domain-containing protein 1 (sun1) from Dictyostelium discoideum (Social amoeba).